The sequence spans 191 residues: Adenylate cyclase CyaB (191 aa).

In terms of domain architecture, CYTH spans 9–180 (RFEVEFKYRL…TRSYRTLCEQ (172 aa)). The active-site Proton acceptor is the tyrosine 46.

This sequence belongs to the adenylyl cyclase CyaB family.

It localises to the cytoplasm. The enzyme catalyses ATP = 3',5'-cyclic AMP + diphosphate. Inhibited by GTP. In terms of biological role, in vitro, CyaB catalyzes the biosynthesis of cyclic AMP (cAMP) from ATP. It seems that under the physiological conditions CyaB has no function in cAMP processes. In vitro, it is also able to hydrolyze substrates such as thiamine triphosphate (ThTP) and inorganic triphosphate (PPPi) at a low rate. It has a slight preference for ThTP over ATP and PPPi in the presence of manganese ions. This PPPase activity is probably not of physiological importance. In Aeromonas hydrophila, this protein is Adenylate cyclase CyaB (cyaB).